The sequence spans 616 residues: Dihydroxy-acid dehydratase (616 aa).

Asp-81 contributes to the Mg(2+) binding site. Residue Cys-122 participates in [2Fe-2S] cluster binding. Mg(2+) is bound by residues Asp-123 and Lys-124. Position 124 is an N6-carboxylysine (Lys-124). Cys-195 contributes to the [2Fe-2S] cluster binding site. Position 491 (Glu-491) interacts with Mg(2+). The Proton acceptor role is filled by Ser-517.

It belongs to the IlvD/Edd family. Homodimer. [2Fe-2S] cluster serves as cofactor. It depends on Mg(2+) as a cofactor.

It catalyses the reaction (2R)-2,3-dihydroxy-3-methylbutanoate = 3-methyl-2-oxobutanoate + H2O. The catalysed reaction is (2R,3R)-2,3-dihydroxy-3-methylpentanoate = (S)-3-methyl-2-oxopentanoate + H2O. It functions in the pathway amino-acid biosynthesis; L-isoleucine biosynthesis; L-isoleucine from 2-oxobutanoate: step 3/4. The protein operates within amino-acid biosynthesis; L-valine biosynthesis; L-valine from pyruvate: step 3/4. Functions in the biosynthesis of branched-chain amino acids. Catalyzes the dehydration of (2R,3R)-2,3-dihydroxy-3-methylpentanoate (2,3-dihydroxy-3-methylvalerate) into 2-oxo-3-methylpentanoate (2-oxo-3-methylvalerate) and of (2R)-2,3-dihydroxy-3-methylbutanoate (2,3-dihydroxyisovalerate) into 2-oxo-3-methylbutanoate (2-oxoisovalerate), the penultimate precursor to L-isoleucine and L-valine, respectively. This Salmonella newport (strain SL254) protein is Dihydroxy-acid dehydratase.